A 74-amino-acid polypeptide reads, in one-letter code: ATP synthase subunit 9, mitochondrial (74 aa).

Helical transmembrane passes span methionine 8–phenylalanine 28 and isoleucine 50–isoleucine 70.

This sequence belongs to the ATPase C chain family. As to quaternary structure, F-type ATPases have 2 components, CF(1) - the catalytic core - and CF(0) - the membrane proton channel. CF(1) has five subunits: alpha(3), beta(3), gamma(1), delta(1), epsilon(1). CF(0) has three main subunits: a, b and c.

Its subcellular location is the mitochondrion membrane. In terms of biological role, this protein is one of the chains of the nonenzymatic membrane component (F0) of mitochondrial ATPase. The chain is ATP synthase subunit 9, mitochondrial (ATP9) from Solanum tuberosum (Potato).